The chain runs to 160 residues: Troponin C, skeletal muscle (160 aa).

N-acetylthreonine is present on T2. EF-hand domains lie at 15 to 50 (EMIA…LGQT), 51 to 86 (PTKE…QMKE), 91 to 126 (KSEE…SGEH), and 127 to 160 (VTEE…EGVQ). Ca(2+) contacts are provided by D28, D30, D34, E39, D64, D66, S68, T70, E75, D104, N106, D108, Y110, E115, D140, N142, D144, R146, and E151.

Belongs to the troponin C family. As to expression, fast skeletal muscle.

In terms of biological role, troponin is the central regulatory protein of striated muscle contraction. Tn consists of three components: Tn-I which is the inhibitor of actomyosin ATPase, Tn-T which contains the binding site for tropomyosin and Tn-C. The binding of calcium to Tn-C abolishes the inhibitory action of Tn on actin filaments. This chain is Troponin C, skeletal muscle (Tnnc2), found in Mus musculus (Mouse).